Reading from the N-terminus, the 683-residue chain is Phenoloxidase 3 (683 aa).

A propeptide spanning residues 1 to 48 (MADKKNLLLLFDHPTEPVFMDKGGNGTVFDVPASYVTDRYNKMCKKVQ) is cleaved from the precursor. N-linked (GlcNAc...) asparagine glycosylation occurs at Asn-25. Positions 209, 213, and 239 each coordinate Cu cation. The active-site Proton acceptor is the Glu-351. Residue Asn-358 is glycosylated (N-linked (GlcNAc...) asparagine). Residues His-366, His-370, and His-406 each contribute to the Cu cation site. 2 N-linked (GlcNAc...) asparagine glycosylation sites follow: Asn-492 and Asn-514. 2 cysteine pairs are disulfide-bonded: Cys-574–Cys-617 and Cys-576–Cys-624.

It belongs to the tyrosinase family. Cu(2+) is required as a cofactor. Upon activation, a trypsin type protease cleaves prophenol oxidase to yield the active enzyme.

The protein localises to the secreted. The catalysed reaction is 2 L-dopa + O2 = 2 L-dopaquinone + 2 H2O. The enzyme catalyses L-tyrosine + O2 = L-dopaquinone + H2O. Its function is as follows. This is a copper-containing oxidase that functions in the formation of pigments such as melanins and other polyphenolic compounds. Catalyzes the rate-limiting conversions of tyrosine to DOPA, DOPA to DOPA-quinone and possibly 5,6 dihydroxyindole to indole-5'6 quinone. This chain is Phenoloxidase 3 (PPO3), found in Drosophila erecta (Fruit fly).